Here is a 218-residue protein sequence, read N- to C-terminus: uncharacterized protein (218 aa).

Transmembrane regions (helical) follow at residues 10–30 (IPPL…SLGI), 55–75 (IGVG…GYSI), 147–167 (VTGG…AGMA), and 175–195 (FSWI…ILLR).

The protein belongs to the DedA family.

The protein resides in the cell membrane. This is an uncharacterized protein from Mycobacterium tuberculosis (strain CDC 1551 / Oshkosh).